A 145-amino-acid chain; its full sequence is uncharacterized protein (145 aa).

This is an uncharacterized protein from Synechocystis sp. (strain ATCC 27184 / PCC 6803 / Kazusa).